A 234-amino-acid polypeptide reads, in one-letter code: Sugar fermentation stimulation protein homolog (234 aa).

The protein belongs to the SfsA family.

This is Sugar fermentation stimulation protein homolog from Shewanella putrefaciens (strain CN-32 / ATCC BAA-453).